The following is a 1058-amino-acid chain: Outer capsid protein VP4 (1058 aa).

This sequence belongs to the orthoreovirus lambda-2 protein family.

It localises to the virion. The enzyme catalyses a 5'-end diphospho-ribonucleoside in mRNA + GTP + H(+) = a 5'-end (5'-triphosphoguanosine)-ribonucleoside in mRNA + diphosphate. It catalyses the reaction a 5'-end (5'-triphosphoguanosine)-ribonucleoside in mRNA + S-adenosyl-L-methionine = a 5'-end (N(7)-methyl 5'-triphosphoguanosine)-ribonucleoside in mRNA + S-adenosyl-L-homocysteine. Its function is as follows. Outer capsid protein involved in mRNA capping. Catalyzes the last 3 enzymatic activities for formation of the 5' cap structure on the viral plus-strand transcripts, namely the RNA guanylyltransferase, RNA-7N- and RNA-2'O-methyltransferase activities. The chain is Outer capsid protein VP4 (S4) from Lymantria dispar cypovirus 1 (isolate Rao) (LdCPV-1).